The sequence spans 313 residues: Dimethyladenosine transferase (313 aa).

H37, L39, G64, E85, D113, and N128 together coordinate S-adenosyl-L-methionine.

Belongs to the class I-like SAM-binding methyltransferase superfamily. rRNA adenine N(6)-methyltransferase family. Part of the small subunit (SSU) processome, composed of more than 70 proteins and the RNA chaperone small nucleolar RNA (snoRNA) U3.

It localises to the nucleus. Its subcellular location is the nucleoplasm. It is found in the nucleolus. It catalyses the reaction adenosine(1779)/adenosine(1780) in 18S rRNA + 4 S-adenosyl-L-methionine = N(6)-dimethyladenosine(1779)/N(6)-dimethyladenosine(1780) in 18S rRNA + 4 S-adenosyl-L-homocysteine + 4 H(+). In terms of biological role, specifically dimethylates two adjacent adenosines in the loop of a conserved hairpin near the 3'-end of 18S rRNA in the 40S particle. Involved in the pre-rRNA processing steps leading to small-subunit rRNA production independently of its RNA-modifying catalytic activity. Part of the small subunit (SSU) processome, first precursor of the small eukaryotic ribosomal subunit. During the assembly of the SSU processome in the nucleolus, many ribosome biogenesis factors, an RNA chaperone and ribosomal proteins associate with the nascent pre-rRNA and work in concert to generate RNA folding, modifications, rearrangements and cleavage as well as targeted degradation of pre-ribosomal RNA by the RNA exosome. The protein is Dimethyladenosine transferase (Dimt1) of Mus musculus (Mouse).